Here is a 335-residue protein sequence, read N- to C-terminus: MSLDINQIALHQLIKRDEQNLELVLRDSLLEPTTTVVEMVAELHRVYSAKNKAYGLFNEESELAQALRLQRQGEEDFLAFSRAATGRLRDELAKYPFADGGIVLFCHYRYLAVEYLLVTVLNNLSSMRVNENLDINPTHYLDINHADIVARIDLTEWETNPQSTRYLTFLKGRVGRKVADFFMDFLGASEGLNAKAQNRGLLQAVDDFTAEAQLDKAERQNVRQQVYSYCNEQLQAGEEIELESLSKELSGVSEVSFSEFTAEKGYELEESFPADRSTLRQLTKYAGSGGGLTINFDAMLLGERIFWDPATDTLTIKGTPPNLRDQLQRRTSGGK.

This sequence belongs to the YejK family.

Its subcellular location is the cytoplasm. It is found in the nucleoid. The chain is Nucleoid-associated protein SeAg_B2375 from Salmonella agona (strain SL483).